Consider the following 629-residue polypeptide: mRNA cleavage and polyadenylation factor CLP1 (629 aa).

ATP is bound by residues Glu21 and Lys72. The disordered stretch occupies residues 142 to 166 (YIAPRTTDPNTETESDPSGTAAATV). The span at 148–159 (TDPNTETESDPS) shows a compositional bias: polar residues. 183 to 188 (SAGKTS) serves as a coordination point for ATP. A disordered region spans residues 562–582 (PPRGGGGAGQPDSSTNPTDDE).

The protein belongs to the Clp1 family. Clp1 subfamily. In terms of assembly, component of a pre-mRNA cleavage factor complex. Interacts directly with PCF11.

The protein localises to the nucleus. In terms of biological role, required for endonucleolytic cleavage during polyadenylation-dependent pre-mRNA 3'-end formation. This is mRNA cleavage and polyadenylation factor CLP1 from Mycosarcoma maydis (Corn smut fungus).